A 610-amino-acid polypeptide reads, in one-letter code: MRYIAGIDIGNSSTEVALATLDEAGALTITHSALAETTGIKGTLRNVFGIQEALALVARGAGIAVSDISLIRINEATPVIGDVAMETITETIITESTMIGHNPKTPGGAGLGTGITITPQELLTRPADAPYILVVSSAFDFADIASVINASLRAGYQITGVILQRDDGVLVSNRLEKPLPIVDEVLYIDRIPLGMLAAIEVAVPGKVIETLSNPYGIATVFNLSPEETKNIVPMARALIGNRSAVVVKTPSGDVKARAIPAGNLELLAQGRSVRVDVAAGAEAIMKAVDGCGRLDNVTGESGTNIGGMLEHVRQTMAELTNKPSSEIFIQDLLAVDTSVPVSVTGGLAGEFSLEQAVGIASMVKSDRLQMAMIAREIEQKLNIDVQIGGAEAEAAILGALTTPGTTRPLAILDLGAGSTDASIINPKGDIIATHLAGAGDMVTMIIARELGLEDRYLAEEIKKYPLAKVESLFHLRHEDGSVQFFSTPLPPAVFARVCVVKADELVPLPGDLALEKVRAIRRSAKERVFVTNALRALRQVSPTGNIRDIPFVVLVGGSSLDFEVPQLVTDALAHYRLVAGRGNIRGSEGPRNAVATGLILSWHKEFAHER.

11–13 (NSS) contributes to the ATP binding site. 3 residues coordinate Mg(2+): Thr105, Asp166, and Asp183. ATP contacts are provided by residues 459–462 (EEIK), 557–558 (GS), and Arg591.

The protein belongs to the DdrA/PduG family. Component of the DDR complex, a heterotetramer of DdrA(2)/DdrB(2). The DDR complex interacts with the diol dehydratase complex in the presence of ADP but not ATP. Mg(2+) serves as cofactor.

It carries out the reaction ATP + H2O = ADP + phosphate + H(+). Functionally, large subunit of the diol dehydratase-reactivating factor (DDR), which reactivates suicidally inhibited adenosylcobalamin-dependent diol dehydratase (DD, pddA, pddB, pddC). DDR acts as a chaperone, reactivating inactivated DD holoenzyme in the presence of ATP, Mg(2+) and free adenosylcobalamin (AdoCbl), by mediating the exchange of the tightly bound damaged cofactor AdoCbl for a free intact one. Reactivation takes place in two steps: ADP-dependent cobalamin release, then ATP-dependent dissociation of the DD apoenzyme-DDR complex. DDR has weak ATPase activity which is required for DD reactivation. This subunit contains the adenosine nucleotide binding site. Activates glycerol-inactivated, O2-inactivated holoenzyme and inactivated enzyme-cyanocobalamin complex. Also reactivates glycerol-inactivated hologlycerol dehydratase, a DD isozyme. The sequence is that of Diol dehydratase-reactivating factor large subunit from Klebsiella michiganensis (strain ATCC 8724 / DSM 4798 / JCM 20051 / NBRC 3318 / NRRL B-199 / KCTC 1686 / BUCSAV 143 / CCM 1901).